The primary structure comprises 96 residues: RING finger protein Z (96 aa).

Basic and acidic residues predominate over residues methionine 1–serine 10. Residues methionine 1–glutamate 21 are disordered. Residue glycine 2 is the site of N-myristoyl glycine; by host attachment. An RING-type; atypical zinc finger spans residues cysteine 41–cysteine 77. The PTAP/PSAP motif signature appears at proline 91–proline 94.

The protein belongs to the arenaviridae Z protein family. As to quaternary structure, interacts with protein NP; this interaction probably directs the encapsidated genome to budding sites. Interacts (via RING domain) with polymerase L; this interaction inhibits viral transcription and replication, Z partially blocks the product exit tunnel for the releasing nascent RNA product. Interacts with the glycoprotein complex; this interaction plays a role in virion budding. Interacts with host eIF4E; this interaction results in eIF4E reduced affinity for its substrate, the 5'-m7 G cap structure. Interacts (via late-budding domain) with host TSG101; this interaction is essential for budding and release of viral particles. Interacts with host RPLP0; this interaction may serve to load ribosome-like particles inside the virion. Interacts with host PML; this interaction induces PML bodies redistribution in the cytoplasm upon viral infection. Myristoylation is required for the role of RING finger protein Z in assembly and budding.

The protein localises to the virion. The protein resides in the host cytoplasm. It is found in the host perinuclear region. Its subcellular location is the host cell membrane. Functionally, plays a crucial role in virion assembly and budding. Expressed late in the virus life cycle, it acts as an inhibitor of viral transcription and RNA synthesis by interacting with the viral polymerase L. Presumably recruits the NP encapsidated genome to cellular membranes at budding sites via direct interaction with NP. Plays critical roles in the final steps of viral release by interacting with host TSG101, a member of the vacuolar protein-sorting pathway and using other cellular host proteins involved in vesicle formation pathway. The budding of the virus progeny occurs after association of protein Z with the viral glycoprotein complex SSP-GP1-GP2 at the cell periphery, step that requires myristoylation of protein Z. Also selectively represses protein production by associating with host eIF4E. In cell-based minigenome assay, has an inhibitory effect on the ribonucleoprotein machinery (vRNP), which is responsible for the replication and transcription of the viral genome. This is RING finger protein Z from Hylaeamys megacephalus (Large-headed rice rat).